We begin with the raw amino-acid sequence, 81 residues long: D-alanyl carrier protein (81 aa).

Positions 1-81 (MADEAIKNGV…KIIAKVEQAQ (81 aa)) constitute a Carrier domain. Ser39 carries the post-translational modification O-(pantetheine 4'-phosphoryl)serine.

The protein belongs to the DltC family. Post-translationally, 4'-phosphopantetheine is transferred from CoA to a specific serine of apo-DCP.

It localises to the cytoplasm. Its pathway is cell wall biogenesis; lipoteichoic acid biosynthesis. Functionally, carrier protein involved in the D-alanylation of lipoteichoic acid (LTA). The loading of thioester-linked D-alanine onto DltC is catalyzed by D-alanine--D-alanyl carrier protein ligase DltA. The DltC-carried D-alanyl group is further transferred to cell membrane phosphatidylglycerol (PG) by forming an ester bond, probably catalyzed by DltD. D-alanylation of LTA plays an important role in modulating the properties of the cell wall in Gram-positive bacteria, influencing the net charge of the cell wall. This chain is D-alanyl carrier protein, found in Lacticaseibacillus rhamnosus (Lactobacillus rhamnosus).